Reading from the N-terminus, the 111-residue chain is Ig kappa chain V-III region PC 2880/PC 1229 (111 aa).

A framework-1 region spans residues 1–23 (DIVLTQSPASLAVSLGQRATISC). Cysteine 23 and cysteine 92 are oxidised to a cystine. The interval 24 to 38 (RASESVDNYGISFMN) is complementarity-determining-1. Residues 39–53 (WFQQKPGQPPKLLIY) form a framework-2 region. Positions 54–60 (AASNQGS) are complementarity-determining-2. The segment at 61 to 92 (GVPARFSGSGSGTDFSLNIHPMEEDDTAMYFC) is framework-3. Positions 93-101 (QQSKEVPWT) are complementarity-determining-3. The segment at 102–111 (FGGGTKLEIK) is framework-4.

In Mus musculus (Mouse), this protein is Ig kappa chain V-III region PC 2880/PC 1229.